The primary structure comprises 45 residues: Large ribosomal subunit protein bL36 (45 aa).

Belongs to the bacterial ribosomal protein bL36 family.

This Aliivibrio salmonicida (strain LFI1238) (Vibrio salmonicida (strain LFI1238)) protein is Large ribosomal subunit protein bL36.